The chain runs to 37 residues: Large ribosomal subunit protein bL36 (37 aa).

This sequence belongs to the bacterial ribosomal protein bL36 family.

In Sulfurovum sp. (strain NBC37-1), this protein is Large ribosomal subunit protein bL36.